We begin with the raw amino-acid sequence, 239 residues long: Phosphoribosylaminoimidazole-succinocarboxamide synthase (239 aa).

It belongs to the SAICAR synthetase family.

It carries out the reaction 5-amino-1-(5-phospho-D-ribosyl)imidazole-4-carboxylate + L-aspartate + ATP = (2S)-2-[5-amino-1-(5-phospho-beta-D-ribosyl)imidazole-4-carboxamido]succinate + ADP + phosphate + 2 H(+). Its pathway is purine metabolism; IMP biosynthesis via de novo pathway; 5-amino-1-(5-phospho-D-ribosyl)imidazole-4-carboxamide from 5-amino-1-(5-phospho-D-ribosyl)imidazole-4-carboxylate: step 1/2. This chain is Phosphoribosylaminoimidazole-succinocarboxamide synthase, found in Shouchella clausii (strain KSM-K16) (Alkalihalobacillus clausii).